A 2671-amino-acid polypeptide reads, in one-letter code: Stalled ribosome sensor GCN1 (2671 aa).

N-acetylalanine is present on Ala2. HEAT repeat units follow at residues 140 to 178 (NKLV…ENPG), 257 to 293 (EFKD…LDLS), 294 to 331 (QYAL…QCSD), 385 to 423 (CVAE…EVPK), 425 to 459 (LTDW…GDTL), 460 to 500 (LQAL…SKLS), 560 to 597 (SKVQ…SLGG), 599 to 636 (KLAN…MGKT), 700 to 732 (AFIT…SLSV), and 733 to 772 (LSPD…PAGE). Ser729 carries the phosphoserine modification. Ser786 bears the Phosphoserine mark. The stretch at 804-865 (QIIEMELKEE…EAALGLLDAI (62 aa)) forms a coiled coil. HEAT repeat units lie at residues 879–918 (VLVD…TLGT), 979–1016 (SLVF…HAQL), 1035–1072 (LPRV…SSSG), 1078–1115 (FAEQ…VLPS), 1155–1192 (DLQS…RYQR), 1210–1250 (YRPP…YLDS), 1251–1289 (SQVK…AHGK), 1290–1332 (ENVN…HLDK), 1335–1372 (PKVK…AVKE), 1374–1410 (AGGM…GLGI), 1413–1451 (LKQQ…MLGK), 1455–1492 (PYVV…NLSA), 1493–1530 (HGVK…CAPK), 1534–1571 (SCLP…VIRN), 1573–1609 (EILA…HFID), 1611–1648 (PSLA…LTDQ), 1653–1690 (PYLP…GMGE), 1692–1729 (CFED…GLGV), 1731–1769 (KLEK…TFGD), 1773–1810 (PYVG…MYAE), 1812–1848 (AIAL…HISG), 1921–1958 (EILP…KLGE), 1959–1996 (KILP…STSR), 2001–2038 (FFSE…TIGH), 2039–2074 (QALE…VKSR), 2076–2108 (VLPY…LTRH), 2111–2146 (VILP…VEDD), 2147–2184 (TGHR…RSKA), 2188–2225 (SHLR…KLDA), 2259–2296 (RGVT…LTSA), 2301–2338 (PSVV…GKVG), 2339–2380 (IALK…IHVK), 2382–2417 (DPLF…GAGS), 2422–2459 (AIRK…FLTD), 2546–2583 (QLPP…EPRP), 2588–2625 (QTIK…MRRG), and 2627–2661 (ELLQ…QADS). The RWDBD region stretch occupies residues 2260 to 2408 (GVTSILPVLR…GIRDTMLQAL (149 aa)). Position 2276 is a phosphoserine (Ser2276).

This sequence belongs to the GCN1 family. Interacts with EIF2AK4/GCN2; this interaction stimulates the EIF2AK4/GCN2 kinase activity and is impaired by IMPACT upon a variety of stress conditions, such as amino acid depletion, UV-C irradiation, proteasome inhibitor treatment and glucose deprivation. Interacts with IMPACT; this prevents the interaction of GCN1 with EIF2AK4/GCN2 and inhibits EIF2AK4/GCN2 kinase activity. Interacts with RNF14; interaction takes place following ribosome stalling and promotes recruitment of RNF14. In terms of tissue distribution, expressed in the hypothalamus, cortex and hippocampus.

It localises to the cytoplasm. In terms of biological role, ribosome collision sensor that plays a key role in the RNF14-RNF25 translation quality control pathway, a pathway that takes place when a ribosome has stalled during translation, and which promotes ubiquitination and degradation of translation factors on stalled ribosomes. Directly binds to the ribosome and acts as a sentinel for colliding ribosomes: activated following ribosome stalling and promotes recruitment of RNF14, which directly ubiquitinates EEF1A1/eEF1A, leading to its degradation. In addition to EEF1A1/eEF1A, the RNF14-RNF25 translation quality control pathway mediates degradation of ETF1/eRF1 and ubiquitination of ribosomal protein. GCN1 also acts as a positive activator of the integrated stress response (ISR) by mediating activation of EIF2AK4/GCN2 in response to amino acid starvation. Interaction with EIF2AK4/GCN2 on translating ribosomes stimulates EIF2AK4/GCN2 kinase activity, leading to phosphorylation of eukaryotic translation initiation factor 2 (eIF-2-alpha/EIF2S1). EIF2S1/eIF-2-alpha phosphorylation converts EIF2S1/eIF-2-alpha into a global protein synthesis inhibitor, leading to a global attenuation of cap-dependent translation, and thus to a reduced overall utilization of amino acids, while concomitantly initiating the preferential translation of ISR-specific mRNAs, such as the transcriptional activator ATF4, and hence allowing ATF4-mediated reprogramming of amino acid biosynthetic gene expression to alleviate nutrient depletion. In Mus musculus (Mouse), this protein is Stalled ribosome sensor GCN1.